The primary structure comprises 176 residues: ATP synthase subunit delta (176 aa).

The protein belongs to the ATPase delta chain family. As to quaternary structure, F-type ATPases have 2 components, F(1) - the catalytic core - and F(0) - the membrane proton channel. F(1) has five subunits: alpha(3), beta(3), gamma(1), delta(1), epsilon(1). F(0) has three main subunits: a(1), b(2) and c(10-14). The alpha and beta chains form an alternating ring which encloses part of the gamma chain. F(1) is attached to F(0) by a central stalk formed by the gamma and epsilon chains, while a peripheral stalk is formed by the delta and b chains.

It is found in the cell inner membrane. F(1)F(0) ATP synthase produces ATP from ADP in the presence of a proton or sodium gradient. F-type ATPases consist of two structural domains, F(1) containing the extramembraneous catalytic core and F(0) containing the membrane proton channel, linked together by a central stalk and a peripheral stalk. During catalysis, ATP synthesis in the catalytic domain of F(1) is coupled via a rotary mechanism of the central stalk subunits to proton translocation. Its function is as follows. This protein is part of the stalk that links CF(0) to CF(1). It either transmits conformational changes from CF(0) to CF(1) or is implicated in proton conduction. This is ATP synthase subunit delta from Campylobacter hominis (strain ATCC BAA-381 / DSM 21671 / CCUG 45161 / LMG 19568 / NCTC 13146 / CH001A).